A 102-amino-acid chain; its full sequence is Alpha-ketoglutarate dehydrogenase component 4 (102 aa).

Glycine 2 is modified (N-acetylglycine). An N6-succinyllysine modification is found at lysine 4. Positions lysine 23 to proline 70 are disordered. Residues leucine 33–serine 46 show a composition bias toward low complexity. Positions histidine 47–proline 61 are enriched in polar residues. A phosphoserine mark is found at serine 48, serine 60, and serine 89.

The protein belongs to the alpha-ketoglutarate dehydrogenase component 4 family. In terms of assembly, component of the 2-oxoglutarate dehydrogenase complex (OGDHC), composed of OGDH (2-oxoglutarate dehydrogenase; also called E1 subunit), DLST (dihydrolipoamide succinyltransferase; also called E2 subunit) and DLD (dihydrolipoamide dehydrogenase; also called E3 subunit), and the assembly factor KGD4. Within OGDHC complex, interacts (via N-terminus) with E3 subunit and (via C-terminus) with E2 subunit.

Its subcellular location is the mitochondrion. Functionally, molecular adapter that is necessary to form a stable 2-oxoglutarate dehydrogenase enzyme complex (OGDHC). Enables the specific recruitment of E3 subunit to E2 subunit in the 2-oxoglutarate dehydrogenase complex (OGDHC). The sequence is that of Alpha-ketoglutarate dehydrogenase component 4 from Mus musculus (Mouse).